Here is a 189-residue protein sequence, read N- to C-terminus: Apolipoprotein D (189 aa).

Residues 1-20 (MVMLLLLLSALAGLFGAAEG) form the signal peptide. Glutamine 21 carries the post-translational modification Pyrrolidone carboxylic acid. Intrachain disulfides connect cysteine 28–cysteine 134 and cysteine 61–cysteine 185. 2 N-linked (GlcNAc...) (complex) asparagine glycosylation sites follow: asparagine 65 and asparagine 98.

This sequence belongs to the calycin superfamily. Lipocalin family. As to quaternary structure, homodimer. In plasma, also exists as a disulfide-linked heterodimer with APOA2. N-glycosylated. N-glycan heterogeneity at Asn-65: Hex5HexNAc4 (major) and Hex6HexNAc5 (minor); at Asn-98: Hex5HexNAc4 (minor), dHex1Hex5HexNAc4 (major), dHex1Hex6HexNAc5 (minor) and dHex1Hex7HexNAc6 (minor). In terms of tissue distribution, expressed in liver, intestine, pancreas, kidney, placenta, adrenal, spleen, fetal brain tissue and tears.

Its subcellular location is the secreted. In terms of biological role, APOD occurs in the macromolecular complex with lecithin-cholesterol acyltransferase. It is probably involved in the transport and binding of bilin. Appears to be able to transport a variety of ligands in a number of different contexts. The chain is Apolipoprotein D (APOD) from Homo sapiens (Human).